Reading from the N-terminus, the 297-residue chain is 2-dehydropantoate 2-reductase (297 aa).

NADP(+) contacts are provided by residues 11–16 (GAGAMG), N107, and A133. N107 lines the substrate pocket. K187 serves as the catalytic Proton donor. Residues N191, N195, N205, and S251 each contribute to the substrate site. An NADP(+)-binding site is contributed by E263.

This sequence belongs to the ketopantoate reductase family.

It is found in the cytoplasm. It catalyses the reaction (R)-pantoate + NADP(+) = 2-dehydropantoate + NADPH + H(+). The protein operates within cofactor biosynthesis; (R)-pantothenate biosynthesis; (R)-pantoate from 3-methyl-2-oxobutanoate: step 2/2. Functionally, catalyzes the NADPH-dependent reduction of ketopantoate into pantoic acid. The chain is 2-dehydropantoate 2-reductase from Listeria monocytogenes serovar 1/2a (strain ATCC BAA-679 / EGD-e).